A 557-amino-acid polypeptide reads, in one-letter code: Dihydroxy-acid dehydratase (557 aa).

Cys-50 contributes to the [2Fe-2S] cluster binding site. A Mg(2+)-binding site is contributed by Asp-82. Cys-123 serves as a coordination point for [2Fe-2S] cluster. Residues Asp-124 and Lys-125 each coordinate Mg(2+). Lys-125 is subject to N6-carboxylysine. Residue Cys-195 coordinates [2Fe-2S] cluster. Glu-447 is a Mg(2+) binding site. Ser-473 functions as the Proton acceptor in the catalytic mechanism.

It belongs to the IlvD/Edd family. As to quaternary structure, homodimer. [2Fe-2S] cluster serves as cofactor. It depends on Mg(2+) as a cofactor.

The enzyme catalyses (2R)-2,3-dihydroxy-3-methylbutanoate = 3-methyl-2-oxobutanoate + H2O. It catalyses the reaction (2R,3R)-2,3-dihydroxy-3-methylpentanoate = (S)-3-methyl-2-oxopentanoate + H2O. It participates in amino-acid biosynthesis; L-isoleucine biosynthesis; L-isoleucine from 2-oxobutanoate: step 3/4. Its pathway is amino-acid biosynthesis; L-valine biosynthesis; L-valine from pyruvate: step 3/4. Its function is as follows. Functions in the biosynthesis of branched-chain amino acids. Catalyzes the dehydration of (2R,3R)-2,3-dihydroxy-3-methylpentanoate (2,3-dihydroxy-3-methylvalerate) into 2-oxo-3-methylpentanoate (2-oxo-3-methylvalerate) and of (2R)-2,3-dihydroxy-3-methylbutanoate (2,3-dihydroxyisovalerate) into 2-oxo-3-methylbutanoate (2-oxoisovalerate), the penultimate precursor to L-isoleucine and L-valine, respectively. This is Dihydroxy-acid dehydratase from Nitrosomonas europaea (strain ATCC 19718 / CIP 103999 / KCTC 2705 / NBRC 14298).